A 182-amino-acid chain; its full sequence is MSFDKQNLIWIDLEMTGLDPEKERIIEIATIVTDKNLNILAEGPVLAVHQSDELLNKMNDWCQKTHSENGLIERVKASKLTERAAELQTLDFLKKWVPKGASPICGNSIAQDKRFLVKYMPDLADYFHYRHLDVSTLKELAARWKPEILEGFKKENTHLALDDIRESIKELAYYREHFMKLD.

An Exonuclease domain is found at 8-171 (LIWIDLEMTG…DDIRESIKEL (164 aa)). Residue Tyr-129 is part of the active site.

The protein belongs to the oligoribonuclease family.

Its subcellular location is the cytoplasm. Its function is as follows. 3'-to-5' exoribonuclease specific for small oligoribonucleotides. This chain is Oligoribonuclease, found in Haemophilus influenzae (strain PittGG).